The primary structure comprises 581 residues: Protein SPT2 homolog (581 aa).

Residues 26-35 (YYSTKYSPPK) are compositionally biased toward low complexity. Disordered stretches follow at residues 26–50 (YYST…NIQK) and 145–495 (QEDK…EYDS). A coiled-coil region spans residues 36-76 (KQSKESKQLSSNIQKFLQKKEAEEAEKKRLERQKLNDLLAK). Residues 162–181 (SGTKERVKAAITREREEAKG) show a composition bias toward basic and acidic residues. 2 stretches are compositionally biased toward polar residues: residues 182-197 (NTRQ…SSAT) and 204-213 (VARSYSTSKT). Basic and acidic residues-rich tracts occupy residues 218–236 (NAEK…EQRR) and 256–312 (LAEK…KETP). Residues 276–307 (ERLLSAREKRELEERQRQQEQRAQRLKMRESE) are a coiled coil. Over residues 352–376 (SSASSTSLSSSNSHSSASRSSVSSS) the composition is skewed to low complexity. The span at 447–461 (TRQTPSSDVQRSQGG) shows a compositional bias: polar residues. Positions 486–495 (DDDDEDEYDS) are enriched in acidic residues.

Belongs to the SPT2 family.

This chain is Protein SPT2 homolog, found in Drosophila melanogaster (Fruit fly).